The following is a 153-amino-acid chain: Endoribonuclease YbeY (153 aa).

Residues His-118, His-122, and His-128 each coordinate Zn(2+).

Belongs to the endoribonuclease YbeY family. It depends on Zn(2+) as a cofactor.

The protein localises to the cytoplasm. Its function is as follows. Single strand-specific metallo-endoribonuclease involved in late-stage 70S ribosome quality control and in maturation of the 3' terminus of the 16S rRNA. The polypeptide is Endoribonuclease YbeY (Staphylococcus haemolyticus (strain JCSC1435)).